The primary structure comprises 246 residues: uncharacterized protein (246 aa).

NADP(+) is bound at residue 10–34 (VITGASSGIGEETVNLLSENGAKLV). Substrate is bound at residue Ser140. The active-site Proton acceptor is Tyr153.

It belongs to the short-chain dehydrogenases/reductases (SDR) family.

This is an uncharacterized protein from Staphylococcus saprophyticus subsp. saprophyticus (strain ATCC 15305 / DSM 20229 / NCIMB 8711 / NCTC 7292 / S-41).